Here is a 206-residue protein sequence, read N- to C-terminus: dTTP/UTP pyrophosphatase (206 aa).

The active-site Proton acceptor is the D79.

The protein belongs to the Maf family. YhdE subfamily. Requires a divalent metal cation as cofactor.

The protein localises to the cytoplasm. It catalyses the reaction dTTP + H2O = dTMP + diphosphate + H(+). The catalysed reaction is UTP + H2O = UMP + diphosphate + H(+). Its function is as follows. Nucleoside triphosphate pyrophosphatase that hydrolyzes dTTP and UTP. May have a dual role in cell division arrest and in preventing the incorporation of modified nucleotides into cellular nucleic acids. This chain is dTTP/UTP pyrophosphatase, found in Rhizobium etli (strain ATCC 51251 / DSM 11541 / JCM 21823 / NBRC 15573 / CFN 42).